Reading from the N-terminus, the 356-residue chain is L-Lys-D/L-Arg epimerase (356 aa).

Substrate contacts are provided by residues threonine 135 and 160 to 162 (KVK). Residues aspartate 190, glutamate 216, and aspartate 241 each coordinate Mg(2+). Substrate is bound by residues lysine 266, aspartate 296, and 319–321 (DLD).

The protein belongs to the mandelate racemase/muconate lactonizing enzyme family. Mg(2+) is required as a cofactor.

Functionally, catalyzes the epimerization of L-Lys-L-Arg to L-Lys-D-Arg. Can also catalyze the epimerization of other cationic dipeptides, such as L-Arg-L-Arg, L-Lys-L-Lys and L-Lys-L-His, but with lower efficiency (in vitro). This Methylococcus capsulatus (strain ATCC 33009 / NCIMB 11132 / Bath) protein is L-Lys-D/L-Arg epimerase.